The chain runs to 469 residues: GTPase Der (469 aa).

2 consecutive EngA-type G domains span residues Pro-3–Val-167 and Pro-175–Met-348. Residues Gly-9 to Ser-16, Asp-56 to Phe-60, Asn-119 to Glu-122, Gly-181 to Ser-188, Asp-228 to Val-232, and Asn-293 to Asp-296 each bind GTP. A KH-like domain is found at Ser-349 to Glu-433. The interval Tyr-429–Lys-469 is disordered.

It belongs to the TRAFAC class TrmE-Era-EngA-EngB-Septin-like GTPase superfamily. EngA (Der) GTPase family. As to quaternary structure, associates with the 50S ribosomal subunit.

GTPase that plays an essential role in the late steps of ribosome biogenesis. In Chromobacterium violaceum (strain ATCC 12472 / DSM 30191 / JCM 1249 / CCUG 213 / NBRC 12614 / NCIMB 9131 / NCTC 9757 / MK), this protein is GTPase Der.